The primary structure comprises 156 residues: Phosphoribosyl-AMP cyclohydrolase (156 aa).

Asp106 lines the Mg(2+) pocket. Cys107 is a binding site for Zn(2+). The Mg(2+) site is built by Asp108 and Asp110. Residues Cys123 and Cys130 each coordinate Zn(2+).

It belongs to the PRA-CH family. In terms of assembly, homodimer. Mg(2+) serves as cofactor. Zn(2+) is required as a cofactor.

Its subcellular location is the cytoplasm. The catalysed reaction is 1-(5-phospho-beta-D-ribosyl)-5'-AMP + H2O = 1-(5-phospho-beta-D-ribosyl)-5-[(5-phospho-beta-D-ribosylamino)methylideneamino]imidazole-4-carboxamide. It functions in the pathway amino-acid biosynthesis; L-histidine biosynthesis; L-histidine from 5-phospho-alpha-D-ribose 1-diphosphate: step 3/9. Functionally, catalyzes the hydrolysis of the adenine ring of phosphoribosyl-AMP. The sequence is that of Phosphoribosyl-AMP cyclohydrolase from Gluconobacter oxydans (strain 621H) (Gluconobacter suboxydans).